Here is a 458-residue protein sequence, read N- to C-terminus: UDP-N-acetylmuramoylalanine--D-glutamate ligase (458 aa).

124 to 130 (GSDGKTT) lines the ATP pocket.

It belongs to the MurCDEF family.

The protein localises to the cytoplasm. It carries out the reaction UDP-N-acetyl-alpha-D-muramoyl-L-alanine + D-glutamate + ATP = UDP-N-acetyl-alpha-D-muramoyl-L-alanyl-D-glutamate + ADP + phosphate + H(+). Its pathway is cell wall biogenesis; peptidoglycan biosynthesis. Functionally, cell wall formation. Catalyzes the addition of glutamate to the nucleotide precursor UDP-N-acetylmuramoyl-L-alanine (UMA). In Clostridium botulinum (strain Alaska E43 / Type E3), this protein is UDP-N-acetylmuramoylalanine--D-glutamate ligase.